Reading from the N-terminus, the 80-residue chain is Putative defensin-like protein 28 (80 aa).

The first 22 residues, 1–22 (MLRANVVVSLVIFAALMQCMNG), serve as a signal peptide directing secretion.

The protein belongs to the DEFL family.

Its subcellular location is the secreted. This is Putative defensin-like protein 28 from Arabidopsis thaliana (Mouse-ear cress).